A 187-amino-acid chain; its full sequence is PRA1 family protein G1 (187 aa).

3 helical membrane-spanning segments follow: residues 84-104 (LFLI…AMWL), 125-145 (VIVF…NSLQ), and 146-166 (CLIL…IIRN).

The protein belongs to the PRA1 family. Expressed in roots and lateral roots.

It is found in the endosome membrane. Functionally, may be involved in both secretory and endocytic intracellular trafficking in the endosomal/prevacuolar compartments. This is PRA1 family protein G1 (PRA1G1) from Arabidopsis thaliana (Mouse-ear cress).